Reading from the N-terminus, the 610-residue chain is Chaperone protein DnaK (610 aa).

Residue Thr173 is modified to Phosphothreonine; by autocatalysis. Positions 579–592 (QQQQAQGANAGQNN) are enriched in low complexity. A disordered region spans residues 579–610 (QQQQAQGANAGQNNDSTVEDAEFKEVKDDDKK). A compositionally biased stretch (basic and acidic residues) spans 599 to 610 (AEFKEVKDDDKK).

It belongs to the heat shock protein 70 family.

In terms of biological role, acts as a chaperone. The protein is Chaperone protein DnaK of Staphylococcus aureus (strain bovine RF122 / ET3-1).